The chain runs to 530 residues: Phosphoenolpyruvate carboxykinase (ATP) (530 aa).

Substrate-binding residues include arginine 58, tyrosine 195, and lysine 201. ATP is bound by residues lysine 201, histidine 220, and 236 to 244 (GLSGTGKTT). Residues lysine 201 and histidine 220 each coordinate Mn(2+). Aspartate 257 is a Mn(2+) binding site. ATP-binding positions include glutamate 285, arginine 321, 440–441 (RI), and threonine 446. Residue arginine 321 coordinates substrate.

This sequence belongs to the phosphoenolpyruvate carboxykinase (ATP) family. The cofactor is Mn(2+).

It localises to the cytoplasm. The enzyme catalyses oxaloacetate + ATP = phosphoenolpyruvate + ADP + CO2. The protein operates within carbohydrate biosynthesis; gluconeogenesis. Involved in the gluconeogenesis. Catalyzes the conversion of oxaloacetate (OAA) to phosphoenolpyruvate (PEP) through direct phosphoryl transfer between the nucleoside triphosphate and OAA. This is Phosphoenolpyruvate carboxykinase (ATP) from Staphylococcus haemolyticus (strain JCSC1435).